We begin with the raw amino-acid sequence, 184 residues long: Large ribosomal subunit protein uL22A (184 aa).

Lys46 participates in a covalent cross-link: Glycyl lysine isopeptide (Lys-Gly) (interchain with G-Cter in ubiquitin). Phosphothreonine is present on Thr70.

Belongs to the universal ribosomal protein uL22 family. As to quaternary structure, component of the large ribosomal subunit (LSU). Mature yeast ribosomes consist of a small (40S) and a large (60S) subunit. The 40S small subunit contains 1 molecule of ribosomal RNA (18S rRNA) and 33 different proteins (encoded by 57 genes). The large 60S subunit contains 3 rRNA molecules (25S, 5.8S and 5S rRNA) and 46 different proteins (encoded by 81 genes). uL22 is associated with the polypeptide exit tunnel.

The protein resides in the cytoplasm. Component of the ribosome, a large ribonucleoprotein complex responsible for the synthesis of proteins in the cell. The small ribosomal subunit (SSU) binds messenger RNAs (mRNAs) and translates the encoded message by selecting cognate aminoacyl-transfer RNA (tRNA) molecules. The large subunit (LSU) contains the ribosomal catalytic site termed the peptidyl transferase center (PTC), which catalyzes the formation of peptide bonds, thereby polymerizing the amino acids delivered by tRNAs into a polypeptide chain. The nascent polypeptides leave the ribosome through a tunnel in the LSU and interact with protein factors that function in enzymatic processing, targeting, and the membrane insertion of nascent chains at the exit of the ribosomal tunnel. In Saccharomyces cerevisiae (strain ATCC 204508 / S288c) (Baker's yeast), this protein is Large ribosomal subunit protein uL22A.